Reading from the N-terminus, the 188-residue chain is UPF0200 protein YG5714_1176 (188 aa).

An ATP-binding site is contributed by 15–22 (GMPGSGKS).

The protein belongs to the UPF0200 family.

The sequence is that of UPF0200 protein YG5714_1176 from Saccharolobus islandicus (strain Y.G.57.14 / Yellowstone #1) (Sulfolobus islandicus).